A 146-amino-acid polypeptide reads, in one-letter code: Transcriptional regulator MraZ (146 aa).

SpoVT-AbrB domains lie at 7-54 and 83-126; these read NATN…GLDL and GVFV…QPEA.

This sequence belongs to the MraZ family. As to quaternary structure, forms oligomers.

It is found in the cytoplasm. The protein localises to the nucleoid. This Rhizobium rhizogenes (strain K84 / ATCC BAA-868) (Agrobacterium radiobacter) protein is Transcriptional regulator MraZ.